The sequence spans 579 residues: Glutamine--tRNA ligase (579 aa).

The 'HIGH' region signature appears at 41-51; sequence PEPNGYLHIGH. Residues 42 to 44 and 48 to 54 contribute to the ATP site; these read EPN and HIGHAKA. The L-glutamine site is built by aspartate 74 and tyrosine 218. Residues threonine 237, 285-286, and 293-295 contribute to the ATP site; these read RL and MSK. Residues 292-296 carry the 'KMSKS' region motif; that stretch reads VMSKR.

This sequence belongs to the class-I aminoacyl-tRNA synthetase family. As to quaternary structure, monomer.

The protein resides in the cytoplasm. The enzyme catalyses tRNA(Gln) + L-glutamine + ATP = L-glutaminyl-tRNA(Gln) + AMP + diphosphate. The protein is Glutamine--tRNA ligase of Xanthomonas euvesicatoria pv. vesicatoria (strain 85-10) (Xanthomonas campestris pv. vesicatoria).